Here is a 227-residue protein sequence, read N- to C-terminus: Ribonuclease 3 (227 aa).

Positions 4–133 (FEKLEKLLSY…LIAAIYLDSN (130 aa)) constitute an RNase III domain. Mg(2+) is bound at residue Glu46. Asp50 is a catalytic residue. Positions 119 and 122 each coordinate Mg(2+). Residue Glu122 is part of the active site. The DRBM domain occupies 158-226 (DPKTALQEWA…ARSLLHRLKN (69 aa)).

It belongs to the ribonuclease III family. In terms of assembly, homodimer. It depends on Mg(2+) as a cofactor.

The protein resides in the cytoplasm. It carries out the reaction Endonucleolytic cleavage to 5'-phosphomonoester.. Its function is as follows. Digests double-stranded RNA. Involved in the processing of primary rRNA transcript to yield the immediate precursors to the large and small rRNAs (23S and 16S). Processes some mRNAs, and tRNAs when they are encoded in the rRNA operon. Processes pre-crRNA and tracrRNA of type II CRISPR loci if present in the organism. The polypeptide is Ribonuclease 3 (Rickettsia conorii (strain ATCC VR-613 / Malish 7)).